The chain runs to 74 residues: UPF0346 protein BPUM_1890 (74 aa).

It belongs to the UPF0346 family.

This Bacillus pumilus (strain SAFR-032) protein is UPF0346 protein BPUM_1890.